Consider the following 828-residue polypeptide: Auxin response factor 2B (828 aa).

A DNA-binding region (TF-B3) is located at residues F128–M230. Disordered regions lie at residues P348–K397, E681–R703, and N791–S828. The segment covering L360 to I370 has biased composition (pro residues). Polar residues predominate over residues V380 to L390. Residues R703–E786 form the PB1 domain. Over residues N791–A806 the composition is skewed to polar residues.

This sequence belongs to the ARF family. As to quaternary structure, homodimers and heterodimers. As to expression, expressed in root, leaf and stem. Also expressed in flower and fruit. Expressed in flower buds about three days before opening including stamen, petal and sepal with the highest in ovary.

The protein localises to the nucleus. Functionally, auxin response factors (ARFs) are transcriptional factors that binds specifically to the DNA sequence 5'-TGTCTC-3' found in the auxin-responsive promoter elements (AuxREs). Could act as transcriptional activator or repressor. Involved in the control of fruit ripening process. Regulates expression of a number of ripening regulators, transcription factors, and ethylene biosynthesis and signaling components. May act as a transcriptional repressor of auxin-responsive genes. The sequence is that of Auxin response factor 2B from Solanum lycopersicum (Tomato).